The primary structure comprises 154 residues: Large ribosomal subunit protein uL13 (154 aa).

It belongs to the universal ribosomal protein uL13 family. As to quaternary structure, part of the 50S ribosomal subunit.

This protein is one of the early assembly proteins of the 50S ribosomal subunit, although it is not seen to bind rRNA by itself. It is important during the early stages of 50S assembly. In Brucella canis (strain ATCC 23365 / NCTC 10854 / RM-666), this protein is Large ribosomal subunit protein uL13.